Reading from the N-terminus, the 307-residue chain is N-acetylmuramic acid 6-phosphate etherase (307 aa).

The SIS domain occupies 62–225; the sequence is IVLAFQKGAR…TTASMIRIGK (164 aa). Catalysis depends on E90, which acts as the Proton donor. E121 is a catalytic residue.

This sequence belongs to the GCKR-like family. MurNAc-6-P etherase subfamily. Homodimer.

The enzyme catalyses N-acetyl-D-muramate 6-phosphate + H2O = N-acetyl-D-glucosamine 6-phosphate + (R)-lactate. It functions in the pathway amino-sugar metabolism; 1,6-anhydro-N-acetylmuramate degradation. It participates in amino-sugar metabolism; N-acetylmuramate degradation. The protein operates within cell wall biogenesis; peptidoglycan recycling. In terms of biological role, specifically catalyzes the cleavage of the D-lactyl ether substituent of MurNAc 6-phosphate, producing GlcNAc 6-phosphate and D-lactate. Together with AnmK, is also required for the utilization of anhydro-N-acetylmuramic acid (anhMurNAc) either imported from the medium or derived from its own cell wall murein, and thus plays a role in cell wall recycling. This chain is N-acetylmuramic acid 6-phosphate etherase, found in Mesorhizobium japonicum (strain LMG 29417 / CECT 9101 / MAFF 303099) (Mesorhizobium loti (strain MAFF 303099)).